Consider the following 342-residue polypeptide: N-acetyl-gamma-glutamyl-phosphate reductase (342 aa).

Cys149 is an active-site residue.

It belongs to the NAGSA dehydrogenase family. Type 1 subfamily.

The protein resides in the cytoplasm. It carries out the reaction N-acetyl-L-glutamate 5-semialdehyde + phosphate + NADP(+) = N-acetyl-L-glutamyl 5-phosphate + NADPH + H(+). It functions in the pathway amino-acid biosynthesis; L-arginine biosynthesis; N(2)-acetyl-L-ornithine from L-glutamate: step 3/4. Catalyzes the NADPH-dependent reduction of N-acetyl-5-glutamyl phosphate to yield N-acetyl-L-glutamate 5-semialdehyde. The polypeptide is N-acetyl-gamma-glutamyl-phosphate reductase (Roseobacter denitrificans (strain ATCC 33942 / OCh 114) (Erythrobacter sp. (strain OCh 114))).